Reading from the N-terminus, the 152-residue chain is D-aminoacyl-tRNA deacylase (152 aa).

Positions 142–143 (GP) match the Gly-cisPro motif, important for rejection of L-amino acids motif.

It belongs to the DTD family. In terms of assembly, homodimer.

Its subcellular location is the cytoplasm. The catalysed reaction is glycyl-tRNA(Ala) + H2O = tRNA(Ala) + glycine + H(+). It catalyses the reaction a D-aminoacyl-tRNA + H2O = a tRNA + a D-alpha-amino acid + H(+). In terms of biological role, an aminoacyl-tRNA editing enzyme that deacylates mischarged D-aminoacyl-tRNAs. Also deacylates mischarged glycyl-tRNA(Ala), protecting cells against glycine mischarging by AlaRS. Acts via tRNA-based rather than protein-based catalysis; rejects L-amino acids rather than detecting D-amino acids in the active site. By recycling D-aminoacyl-tRNA to D-amino acids and free tRNA molecules, this enzyme counteracts the toxicity associated with the formation of D-aminoacyl-tRNA entities in vivo and helps enforce protein L-homochirality. In Paraburkholderia phymatum (strain DSM 17167 / CIP 108236 / LMG 21445 / STM815) (Burkholderia phymatum), this protein is D-aminoacyl-tRNA deacylase.